We begin with the raw amino-acid sequence, 350 residues long: Phenylalanine--tRNA ligase alpha subunit (350 aa).

Glutamate 271 is a binding site for Mg(2+).

It belongs to the class-II aminoacyl-tRNA synthetase family. Phe-tRNA synthetase alpha subunit type 1 subfamily. Tetramer of two alpha and two beta subunits. Requires Mg(2+) as cofactor.

Its subcellular location is the cytoplasm. It catalyses the reaction tRNA(Phe) + L-phenylalanine + ATP = L-phenylalanyl-tRNA(Phe) + AMP + diphosphate + H(+). The polypeptide is Phenylalanine--tRNA ligase alpha subunit (Paracidovorax citrulli (strain AAC00-1) (Acidovorax citrulli)).